The sequence spans 78 residues: uncharacterized protein (78 aa).

Transmembrane regions (helical) follow at residues 20 to 40 (SVYF…WLVV) and 57 to 77 (LLMD…ILIA).

Its subcellular location is the cell membrane. This is an uncharacterized protein from Escherichia coli (strain K12).